The primary structure comprises 263 residues: Proteasome subunit beta type-5 (263 aa).

A propeptide spans 1-59 (MALASVLERPLSVNRRGFFGLGGRADLLDLGPGSPSDGLSLAAPSWGVPEEPRIEILHG) (removed in mature form). The active-site Nucleophile is Thr60. Bortezomib is bound at residue Ala108.

Belongs to the peptidase T1B family. The 26S proteasome consists of a 20S proteasome core and two 19S regulatory subunits. The 20S proteasome core is a barrel-shaped complex made of 28 subunits that are arranged in four stacked rings. The two outer rings are each formed by seven alpha subunits, and the two inner rings are formed by seven beta subunits. The proteolytic activity is exerted by three beta-subunits PSMB5, PSMB6 and PSMB7. Directly interacts with POMP. Interacts with ABCB1 and TAP1.

It localises to the cytoplasm. The protein localises to the nucleus. The catalysed reaction is Cleavage of peptide bonds with very broad specificity.. Its function is as follows. Component of the 20S core proteasome complex involved in the proteolytic degradation of most intracellular proteins. This complex plays numerous essential roles within the cell by associating with different regulatory particles. Associated with two 19S regulatory particles, forms the 26S proteasome and thus participates in the ATP-dependent degradation of ubiquitinated proteins. The 26S proteasome plays a key role in the maintenance of protein homeostasis by removing misfolded or damaged proteins that could impair cellular functions, and by removing proteins whose functions are no longer required. Associated with the PA200 or PA28, the 20S proteasome mediates ubiquitin-independent protein degradation. This type of proteolysis is required in several pathways including spermatogenesis (20S-PA200 complex) or generation of a subset of MHC class I-presented antigenic peptides (20S-PA28 complex). Within the 20S core complex, PSMB5 displays a chymotrypsin-like activity. The sequence is that of Proteasome subunit beta type-5 from Bos taurus (Bovine).